A 239-amino-acid chain; its full sequence is Pyrroloquinoline-quinone synthase (239 aa).

This sequence belongs to the PqqC family.

It catalyses the reaction 6-(2-amino-2-carboxyethyl)-7,8-dioxo-1,2,3,4,7,8-hexahydroquinoline-2,4-dicarboxylate + 3 O2 = pyrroloquinoline quinone + 2 H2O2 + 2 H2O + H(+). It functions in the pathway cofactor biosynthesis; pyrroloquinoline quinone biosynthesis. Its function is as follows. Ring cyclization and eight-electron oxidation of 3a-(2-amino-2-carboxyethyl)-4,5-dioxo-4,5,6,7,8,9-hexahydroquinoline-7,9-dicarboxylic-acid to PQQ. The sequence is that of Pyrroloquinoline-quinone synthase from Gluconobacter oxydans (strain 621H) (Gluconobacter suboxydans).